The sequence spans 117 residues: Large ribosomal subunit protein bL20c (117 aa).

Belongs to the bacterial ribosomal protein bL20 family.

It is found in the plastid. The protein localises to the chloroplast. Its function is as follows. Binds directly to 23S ribosomal RNA and is necessary for the in vitro assembly process of the 50S ribosomal subunit. It is not involved in the protein synthesizing functions of that subunit. This chain is Large ribosomal subunit protein bL20c, found in Ceratophyllum demersum (Rigid hornwort).